Here is a 175-residue protein sequence, read N- to C-terminus: RNA pyrophosphohydrolase (175 aa).

Residues 7–150 (GYRLNVGIIL…KRQVYIQALK (144 aa)) form the Nudix hydrolase domain. The short motif at 39–60 (GGLAPGETAMQAMYRELHEEVG) is the Nudix box element.

This sequence belongs to the Nudix hydrolase family. RppH subfamily. A divalent metal cation serves as cofactor.

Its function is as follows. Accelerates the degradation of transcripts by removing pyrophosphate from the 5'-end of triphosphorylated RNA, leading to a more labile monophosphorylated state that can stimulate subsequent ribonuclease cleavage. This chain is RNA pyrophosphohydrolase, found in Legionella pneumophila (strain Paris).